A 352-amino-acid polypeptide reads, in one-letter code: Dysbindin (352 aa).

Serine 11 carries the post-translational modification Phosphoserine. Residues 88–176 are a coiled coil; the sequence is EKKRTSLNEL…EAFKAELDTE (89 aa). A dysbindin region spans residues 173–325; that stretch reads LDTEHTQKAL…DEEEVQVDTA (153 aa). Residues 243–256 carry the Nuclear export signal motif; that stretch reads LMDISDQEALDVFL. The disordered stretch occupies residues 267–352; it reads SPGVEMESNP…SDQCDSTQDI (86 aa). A compositionally biased stretch (polar residues) spans 274-285; the sequence is SNPNQNEMSLQI. The segment covering 286–301 has biased composition (low complexity); that stretch reads PSPSESASQPPASPSA. Serine 315, serine 340, and serine 343 each carry phosphoserine.

Belongs to the dysbindin family. Interacts with AP3M1 and TRIM32. Interacts (isoform 1 and isoform 2 only) with the DNA-dependent protein kinase complex DNA-PK; the interaction phosphorylates DTNBP1 in vitro. Interacts directly in this complex with XRCC5 and XRCC6. Interacts with XPO1; the interaction exports DTNBP1 out of the nucleus. Component of the biogenesis of lysosome-related organelles complex 1 (BLOC-1) composed of BLOC1S1, BLOC1S2, BLOC1S3, BLOC1S4, BLOC1S5, BLOC1S6, DTNBP1/BLOC1S7 and SNAPIN/BLOC1S8. The BLOC-1 complex associates with the AP-3 protein complex and membrane protein cargos. This BLOC-1 complex also associates with the BLOC-2 complex in endosomes. Binds to DTNA and DTNB but may not be a physiological binding partner. Interacts (via its coiled coil domain) with KXD1. Interacts with AP3B2, BLOC1S5, BLOC1S6, CMYA5, PI4K2, RNF151 and SNAPIN/BLOC1S8. Interacts with XPO1; the interaction exports DTNBP1 out of the nucleus. In terms of processing, ubiquitinated by TRIM32. Ubiquitination leads to DTNBP1 degradation. Detected in brain, in hippocampus and dentate gyrus neurons. Detected at axon bundles and axon terminals, notably in the cerebellum and hippocampus. Detected in neuropil in hippocampus, lateral septum, basal ganglia and substantia nigra. Highly expressed in pyramidal cells of hippocampus CA2 and CA3. Detected at the heart and skeletal muscle sarcolemma (at protein level). Ubiquitously expressed. The highest expression is observed in testis, liver, kidney, brain, heart and lung. Expressed at lower levels in stomach and small intestine.

Its subcellular location is the cytoplasm. The protein localises to the cytoplasmic vesicle membrane. The protein resides in the endosome membrane. It localises to the melanosome membrane. It is found in the postsynaptic density. Its subcellular location is the endoplasmic reticulum. The protein localises to the nucleus. The protein resides in the cytoplasmic vesicle. It localises to the secretory vesicle. It is found in the synaptic vesicle membrane. Its subcellular location is the postsynaptic cell membrane. Component of the BLOC-1 complex, a complex that is required for normal biogenesis of lysosome-related organelles (LRO), such as platelet dense granules and melanosomes. In concert with the AP-3 complex, the BLOC-1 complex is required to target membrane protein cargos into vesicles assembled at cell bodies for delivery into neurites and nerve terminals. The BLOC-1 complex, in association with SNARE proteins, is also proposed to be involved in neurite extension. Associates with the BLOC-2 complex to facilitate the transport of TYRP1 independent of AP-3 function. Plays a role in synaptic vesicle trafficking and in neurotransmitter release. Plays a role in the regulation of cell surface exposure of DRD2. May play a role in actin cytoskeleton reorganization and neurite outgrowth. May modulate MAPK8 phosphorylation. Appears to promote neuronal transmission and viability through regulating the expression of SNAP25 and SYN1, modulating PI3-kinase-Akt signaling and influencing glutamatergic release. Regulates the expression of SYN1 through binding to its promoter. Modulates prefrontal cortical activity via the dopamine/D2 pathway. In Mus musculus (Mouse), this protein is Dysbindin (Dtnbp1).